The following is a 200-amino-acid chain: Putative TLC domain-containing protein L438 (200 aa).

In terms of domain architecture, TLC spans 1–193 (MDYKQSNLFL…ILKILRAKLF (193 aa)). Helical transmembrane passes span 9 to 29 (FLFPIGLGSTYIFYKKICGTF), 43 to 63 (THGILMLTLVYFLSDYYLMIV), 74 to 94 (VHHFIGIVSIYFSYMKYYYLI), 96 to 116 (YLFAYLTFELSTPFLNIAIKY), 131 to 151 (LAFFILFTVVRIIFGTYLWFV), and 165 to 185 (YLIVLPTILQFLNYWWYYRIL).

Its subcellular location is the membrane. The protein is Putative TLC domain-containing protein L438 of Acanthamoeba polyphaga mimivirus (APMV).